A 280-amino-acid polypeptide reads, in one-letter code: Phosphatidylglycerol--prolipoprotein diacylglyceryl transferase (280 aa).

Helical transmembrane passes span 19 to 39 (LSVR…YFVA), 56 to 76 (IIFY…VIFQ), and 90 to 110 (IWHG…AGVI). Arg138 contacts a 1,2-diacyl-sn-glycero-3-phospho-(1'-sn-glycerol). 2 helical membrane passes run 204-224 (LGET…FIEG) and 236-256 (IRVA…LIVY).

It belongs to the Lgt family.

The protein localises to the cell membrane. It carries out the reaction L-cysteinyl-[prolipoprotein] + a 1,2-diacyl-sn-glycero-3-phospho-(1'-sn-glycerol) = an S-1,2-diacyl-sn-glyceryl-L-cysteinyl-[prolipoprotein] + sn-glycerol 1-phosphate + H(+). It functions in the pathway protein modification; lipoprotein biosynthesis (diacylglyceryl transfer). In terms of biological role, catalyzes the transfer of the diacylglyceryl group from phosphatidylglycerol to the sulfhydryl group of the N-terminal cysteine of a prolipoprotein, the first step in the formation of mature lipoproteins. The sequence is that of Phosphatidylglycerol--prolipoprotein diacylglyceryl transferase from Staphylococcus aureus (strain MRSA252).